A 423-amino-acid chain; its full sequence is Cell adhesion molecule CEACAM16 (423 aa).

Positions 1–22 (MKMPLTWGSWFLLSAWILNAGA) are cleaved as a signal peptide. N-linked (GlcNAc...) asparagine glycosylation occurs at Asn-38. The segment at 77–96 (ETPGPAHTGREAVRPDGSLD) is disordered. Residues 84–95 (TGREAVRPDGSL) are compositionally biased toward basic and acidic residues. 2 Ig-like C2-type domains span residues 134–219 (PPTV…LNLT) and 224–310 (PERV…ASVV). A disulfide bridge links Cys-155 with Cys-202. Residue Asn-217 is glycosylated (N-linked (GlcNAc...) asparagine). Cys-253 and Cys-294 form a disulfide bridge.

Belongs to the immunoglobulin superfamily. CEA family. As to quaternary structure, homooligomer; can for homodimers and homotetramers. Interacts with TECTA and TECTB.

It localises to the secreted. Functionally, required for proper hearing, plays a role in maintaining the integrity of the tectorial membrane. The protein is Cell adhesion molecule CEACAM16 of Rattus norvegicus (Rat).